We begin with the raw amino-acid sequence, 54 residues long: Relaxin (54 aa).

Glutamine 1 is modified (pyrrolidone carboxylic acid). Disulfide bonds link cysteine 10–cysteine 41, cysteine 22–cysteine 54, and cysteine 40–cysteine 45.

The protein belongs to the insulin family. In terms of assembly, heterodimer of a B chain and an A chain linked by two disulfide bonds.

It localises to the secreted. Its function is as follows. Relaxin is an ovarian hormone that acts with estrogen to produce dilatation of the birth canal in many mammals. The sequence is that of Relaxin from Balaenoptera edeni (Pigmy Bryde's whale).